We begin with the raw amino-acid sequence, 260 residues long: Methanethiol S-methyltransferase (260 aa).

5 helical membrane passes run 27–47, 55–75, 107–127, 134–154, and 196–216; these read CYLF…GIGV, PGIT…LFAA, CLVL…VWNV, GLLI…TFLI, and FLIA…FAIL.

The protein belongs to the nurim family.

It localises to the membrane. It carries out the reaction methanethiol + S-adenosyl-L-methionine = dimethyl sulfide + S-adenosyl-L-homocysteine + H(+). In terms of biological role, catalyzes the methylation of methanethiol (MeSH) to yield dimethylsulphide (DMS). In Pseudomonas sp. (strain GM41(2012)), this protein is Methanethiol S-methyltransferase.